We begin with the raw amino-acid sequence, 85 residues long: V-type proton ATPase subunit f (85 aa).

Topologically, residues methionine 1 to alanine 10 are lumenal. A helical membrane pass occupies residues tryptophan 11–phenylalanine 31. At asparagine 32–threonine 54 the chain is on the cytoplasmic side. Residues valine 55–leucine 75 form a helical membrane-spanning segment. At alanine 76 to arginine 85 the chain is on the lumenal side.

As to quaternary structure, V-ATPase is a heteromultimeric enzyme composed of a peripheral catalytic V1 complex (components A to H) attached to an integral membrane V0 proton pore complex (components: a, c, c', c'', d, e, f and VOA1).

It localises to the endoplasmic reticulum membrane. Its subcellular location is the vacuole membrane. Functionally, accessory component of the V0 complex of vacuolar(H+)-ATPase (V-ATPase), a multisubunit enzyme composed of a peripheral complex (V1) that hydrolyzes ATP and a membrane integral complex (V0) that translocates protons. V-ATPase is responsible for acidifying and maintaining the pH of intracellular compartments. In Saccharomyces cerevisiae (strain ATCC 204508 / S288c) (Baker's yeast), this protein is V-type proton ATPase subunit f.